A 614-amino-acid chain; its full sequence is Ankyrin repeat domain-containing protein 55 (614 aa).

Residues 1–20 (MMRQATMDFSTPSVFDQQRG) are disordered. Residues 7-16 (MDFSTPSVFD) show a composition bias toward polar residues. 9 ANK repeats span residues 26–55 (VDLT…SILE), 60–89 (EGCT…NINM), 93–125 (YGRT…IPDK), 126–157 (NGRL…EINH), 161–190 (EGMT…DPTL), 194–223 (DFKT…GPSI), 230–260 (SGKT…NLQA), 264–293 (DDRT…DSNL), and 297–326 (NEST…TEPT). Disordered regions lie at residues 319–339 (QESR…PQKK), 354–375 (KKEE…EEDT), 454–476 (TSHA…SRSE), and 564–614 (RNNL…SDEN). The span at 354–373 (KKEEQRAHQKDPSRDRYREE) shows a compositional bias: basic and acidic residues. A Phosphoserine modification is found at serine 475.

The protein is Ankyrin repeat domain-containing protein 55 (ANKRD55) of Homo sapiens (Human).